A 92-amino-acid polypeptide reads, in one-letter code: Small ribosomal subunit protein uS19 (92 aa).

Belongs to the universal ribosomal protein uS19 family.

Functionally, protein S19 forms a complex with S13 that binds strongly to the 16S ribosomal RNA. This is Small ribosomal subunit protein uS19 from Treponema denticola (strain ATCC 35405 / DSM 14222 / CIP 103919 / JCM 8153 / KCTC 15104).